The following is a 227-amino-acid chain: Cytochrome c oxidase subunit 2 (227 aa).

The Mitochondrial intermembrane segment spans residues 1 to 14 (MAYPFQLGLQDATS). A helical membrane pass occupies residues 15–45 (PIMEELLHFHDHTLMIVFLISSLVLYIITLM). At 46-59 (LTTKLTHTSTMDAQ) the chain is on the mitochondrial matrix side. Residues 60 to 87 (EVETVWTILPAIILILIALPSLRILYMM) form a helical membrane-spanning segment. The Mitochondrial intermembrane portion of the chain corresponds to 88–227 (DEINNPSLTV…YFETWSAVMV (140 aa)). Cu cation contacts are provided by H161, C196, E198, C200, H204, and M207. Position 198 (E198) interacts with Mg(2+). The residue at position 218 (Y218) is a Phosphotyrosine.

The protein belongs to the cytochrome c oxidase subunit 2 family. Component of the cytochrome c oxidase (complex IV, CIV), a multisubunit enzyme composed of 14 subunits. The complex is composed of a catalytic core of 3 subunits MT-CO1, MT-CO2 and MT-CO3, encoded in the mitochondrial DNA, and 11 supernumerary subunits COX4I, COX5A, COX5B, COX6A, COX6B, COX6C, COX7A, COX7B, COX7C, COX8 and NDUFA4, which are encoded in the nuclear genome. The complex exists as a monomer or a dimer and forms supercomplexes (SCs) in the inner mitochondrial membrane with NADH-ubiquinone oxidoreductase (complex I, CI) and ubiquinol-cytochrome c oxidoreductase (cytochrome b-c1 complex, complex III, CIII), resulting in different assemblies (supercomplex SCI(1)III(2)IV(1) and megacomplex MCI(2)III(2)IV(2)). Found in a complex with TMEM177, COA6, COX18, COX20, SCO1 and SCO2. Interacts with TMEM177 in a COX20-dependent manner. Interacts with COX20. Interacts with COX16. The cofactor is Cu cation.

It is found in the mitochondrion inner membrane. The enzyme catalyses 4 Fe(II)-[cytochrome c] + O2 + 8 H(+)(in) = 4 Fe(III)-[cytochrome c] + 2 H2O + 4 H(+)(out). Its function is as follows. Component of the cytochrome c oxidase, the last enzyme in the mitochondrial electron transport chain which drives oxidative phosphorylation. The respiratory chain contains 3 multisubunit complexes succinate dehydrogenase (complex II, CII), ubiquinol-cytochrome c oxidoreductase (cytochrome b-c1 complex, complex III, CIII) and cytochrome c oxidase (complex IV, CIV), that cooperate to transfer electrons derived from NADH and succinate to molecular oxygen, creating an electrochemical gradient over the inner membrane that drives transmembrane transport and the ATP synthase. Cytochrome c oxidase is the component of the respiratory chain that catalyzes the reduction of oxygen to water. Electrons originating from reduced cytochrome c in the intermembrane space (IMS) are transferred via the dinuclear copper A center (CU(A)) of subunit 2 and heme A of subunit 1 to the active site in subunit 1, a binuclear center (BNC) formed by heme A3 and copper B (CU(B)). The BNC reduces molecular oxygen to 2 water molecules using 4 electrons from cytochrome c in the IMS and 4 protons from the mitochondrial matrix. The sequence is that of Cytochrome c oxidase subunit 2 (MT-CO2) from Vulpes vulpes (Red fox).